The primary structure comprises 318 residues: Olfactory receptor 2A2 (318 aa).

The Extracellular segment spans residues 1-24; that stretch reads MEGNQTWITDITLLGFQVGPALAI. A glycan (N-linked (GlcNAc...) asparagine) is linked at asparagine 4. The helical transmembrane segment at 25–48 threads the bilayer; sequence LLCGLFSVFYTLTLLGNGVIFGII. The Cytoplasmic segment spans residues 49–56; it reads CLDSKLHT. Residues 57-78 form a helical membrane-spanning segment; that stretch reads PMYFFLSHLAIIDMSYASNNVP. The Extracellular portion of the chain corresponds to 79 to 99; that stretch reads KMLANLMNQKRTISFVPCIMQ. Residues 100–119 form a helical membrane-spanning segment; the sequence is TFLYLAFAVTECLILVVMSY. The Cytoplasmic segment spans residues 120 to 138; the sequence is DRYVAICHPFQYTVIMSWR. The helical transmembrane segment at 139 to 157 threads the bilayer; that stretch reads VCTILVLTSWSCGFALSLV. Residues 158–194 are Extracellular-facing; that stretch reads HEILLLRLPFCGPRDVNHLFCEILSVLKLACADTWVN. A helical membrane pass occupies residues 195 to 218; that stretch reads QVVIFATCVFVLVGPLSLILVSYM. At 219 to 235 the chain is on the cytoplasmic side; the sequence is HILGAILKIQTKEGRIK. Residues 236–258 traverse the membrane as a helical segment; that stretch reads AFSTCSSHLCVVGLFFGIAMVVY. At 259 to 271 the chain is on the extracellular side; sequence MVPDSNQREEQEK. The chain crosses the membrane as a helical span at residues 272–291; sequence MLSLFHSVFNPMLNPLIYSL. Residues 292–310 lie on the Cytoplasmic side of the membrane; that stretch reads RNAQLKGALHRALQRKRSM.

It belongs to the G-protein coupled receptor 1 family.

The protein localises to the cell membrane. In terms of biological role, odorant receptor. In Homo sapiens (Human), this protein is Olfactory receptor 2A2 (OR2A2).